We begin with the raw amino-acid sequence, 307 residues long: Aspartate carbamoyltransferase catalytic subunit (307 aa).

Arginine 56 and threonine 57 together coordinate carbamoyl phosphate. Residue lysine 84 participates in L-aspartate binding. Arginine 106, histidine 136, and glutamine 139 together coordinate carbamoyl phosphate. L-aspartate-binding residues include arginine 169 and arginine 221. Carbamoyl phosphate contacts are provided by alanine 262 and proline 263.

This sequence belongs to the aspartate/ornithine carbamoyltransferase superfamily. ATCase family. As to quaternary structure, heterododecamer (2C3:3R2) of six catalytic PyrB chains organized as two trimers (C3), and six regulatory PyrI chains organized as three dimers (R2).

It catalyses the reaction carbamoyl phosphate + L-aspartate = N-carbamoyl-L-aspartate + phosphate + H(+). It functions in the pathway pyrimidine metabolism; UMP biosynthesis via de novo pathway; (S)-dihydroorotate from bicarbonate: step 2/3. Catalyzes the condensation of carbamoyl phosphate and aspartate to form carbamoyl aspartate and inorganic phosphate, the committed step in the de novo pyrimidine nucleotide biosynthesis pathway. This Streptococcus pneumoniae (strain P1031) protein is Aspartate carbamoyltransferase catalytic subunit.